The chain runs to 334 residues: BTB and MATH domain-containing protein 39 (334 aa).

The region spanning 14-141 (IVTLVFNIYN…EGRFQIEFDL (128 aa)) is the MATH domain. One can recognise a BTB domain in the interval 164-229 (ADGELITDGK…LQLDSFEVSV (66 aa)).

This is BTB and MATH domain-containing protein 39 (bath-39) from Caenorhabditis elegans.